The chain runs to 37 residues: Large ribosomal subunit protein bL36B (37 aa).

The protein belongs to the bacterial ribosomal protein bL36 family.

The polypeptide is Large ribosomal subunit protein bL36B (Paenarthrobacter aurescens (strain TC1)).